The following is a 328-amino-acid chain: Peroxidase 25 (328 aa).

The first 26 residues, 1-26 (MGVYLGKYCYIMIIMLVLVLGKEVRS), serve as a signal peptide directing secretion. 4 disulfides stabilise this stretch: C38/C114, C71/C76, C120/C324, and C198/C230. The active-site Proton acceptor is H69. Residues D70, V73, G75, D77, and S79 each coordinate Ca(2+). P161 is a binding site for substrate. Heme b is bound at residue H191. T192 contributes to the Ca(2+) binding site. The N-linked (GlcNAc...) asparagine glycan is linked to N207. 3 residues coordinate Ca(2+): D243, S246, and D251.

It belongs to the peroxidase family. Classical plant (class III) peroxidase subfamily. The cofactor is heme b. Ca(2+) serves as cofactor.

The protein resides in the secreted. It carries out the reaction 2 a phenolic donor + H2O2 = 2 a phenolic radical donor + 2 H2O. In terms of biological role, removal of H(2)O(2), oxidation of toxic reductants, biosynthesis and degradation of lignin, suberization, auxin catabolism, response to environmental stresses such as wounding, pathogen attack and oxidative stress. These functions might be dependent on each isozyme/isoform in each plant tissue. In Arabidopsis thaliana (Mouse-ear cress), this protein is Peroxidase 25 (PER25).